Consider the following 202-residue polypeptide: Glycerol-3-phosphate acyltransferase (202 aa).

The next 4 helical transmembrane spans lie at 11–31 (ALIA…GLIL), 87–107 (PALA…WLGF), 116–136 (FIGV…AIWL), and 158–178 (VILW…LAAL).

The protein belongs to the PlsY family. As to quaternary structure, probably interacts with PlsX.

The protein resides in the cell inner membrane. It carries out the reaction an acyl phosphate + sn-glycerol 3-phosphate = a 1-acyl-sn-glycero-3-phosphate + phosphate. It participates in lipid metabolism; phospholipid metabolism. Functionally, catalyzes the transfer of an acyl group from acyl-phosphate (acyl-PO(4)) to glycerol-3-phosphate (G3P) to form lysophosphatidic acid (LPA). This enzyme utilizes acyl-phosphate as fatty acyl donor, but not acyl-CoA or acyl-ACP. In Methylorubrum populi (strain ATCC BAA-705 / NCIMB 13946 / BJ001) (Methylobacterium populi), this protein is Glycerol-3-phosphate acyltransferase.